A 408-amino-acid chain; its full sequence is Acetylornithine aminotransferase (408 aa).

Pyridoxal 5'-phosphate-binding positions include 107–108 and Phe-141; that span reads GT. Arg-144 provides a ligand contact to N(2)-acetyl-L-ornithine. 227–230 serves as a coordination point for pyridoxal 5'-phosphate; it reads DEIQ. At Lys-256 the chain carries N6-(pyridoxal phosphate)lysine. Thr-284 is a binding site for N(2)-acetyl-L-ornithine. Thr-285 is a binding site for pyridoxal 5'-phosphate.

This sequence belongs to the class-III pyridoxal-phosphate-dependent aminotransferase family. ArgD subfamily. In terms of assembly, homodimer. Requires pyridoxal 5'-phosphate as cofactor.

The protein resides in the cytoplasm. It carries out the reaction N(2)-acetyl-L-ornithine + 2-oxoglutarate = N-acetyl-L-glutamate 5-semialdehyde + L-glutamate. The protein operates within amino-acid biosynthesis; L-arginine biosynthesis; N(2)-acetyl-L-ornithine from L-glutamate: step 4/4. This chain is Acetylornithine aminotransferase, found in Xanthomonas campestris pv. campestris (strain ATCC 33913 / DSM 3586 / NCPPB 528 / LMG 568 / P 25).